A 407-amino-acid polypeptide reads, in one-letter code: Na(+)-translocating NADH-quinone reductase subunit F (407 aa).

Residues 3-23 (IILGVVMFTLIVLALTVMILF) traverse the membrane as a helical segment. Residues 32 to 126 (GDITVEINED…NLKIELPEEI (95 aa)) form the 2Fe-2S ferredoxin-type domain. [2Fe-2S] cluster contacts are provided by C69, C75, C78, and C110. The FAD-binding FR-type domain occupies 129-269 (VKKWTCEVIS…SGPFGEFFAK (141 aa)).

It belongs to the NqrF family. In terms of assembly, composed of six subunits; NqrA, NqrB, NqrC, NqrD, NqrE and NqrF. The cofactor is [2Fe-2S] cluster. It depends on FAD as a cofactor.

It localises to the cell inner membrane. It catalyses the reaction a ubiquinone + n Na(+)(in) + NADH + H(+) = a ubiquinol + n Na(+)(out) + NAD(+). NQR complex catalyzes the reduction of ubiquinone-1 to ubiquinol by two successive reactions, coupled with the transport of Na(+) ions from the cytoplasm to the periplasm. The first step is catalyzed by NqrF, which accepts electrons from NADH and reduces ubiquinone-1 to ubisemiquinone by a one-electron transfer pathway. This is Na(+)-translocating NADH-quinone reductase subunit F from Yersinia pseudotuberculosis serotype I (strain IP32953).